A 385-amino-acid polypeptide reads, in one-letter code: Acetate kinase (385 aa).

Mg(2+) is bound at residue Asn-9. Lys-16 is a binding site for ATP. Substrate is bound at residue Arg-87. Catalysis depends on Asp-144, which acts as the Proton donor/acceptor. Residues 202–206 (HLGSG) and 277–279 (DMR) contribute to the ATP site. Glu-373 contributes to the Mg(2+) binding site.

This sequence belongs to the acetokinase family. In terms of assembly, homodimer. Requires Mg(2+) as cofactor. Mn(2+) is required as a cofactor.

It is found in the cytoplasm. It catalyses the reaction acetate + ATP = acetyl phosphate + ADP. Its pathway is metabolic intermediate biosynthesis; acetyl-CoA biosynthesis; acetyl-CoA from acetate: step 1/2. In terms of biological role, catalyzes the formation of acetyl phosphate from acetate and ATP. Can also catalyze the reverse reaction. This Rickettsia prowazekii (strain Madrid E) protein is Acetate kinase.